Consider the following 340-residue polypeptide: Replication initiation protein (340 aa).

The interval 38–58 (PERKRTKRRRGEHSTKPKCEN) is disordered.

The sequence is that of Replication initiation protein (repA1) from Escherichia coli.